Reading from the N-terminus, the 277-residue chain is Undecaprenyl-diphosphatase (277 aa).

8 helical membrane passes run 1-21 (MDII…FLPV), 38-58 (SSLA…LWFF), 93-113 (LVWY…LFES), 118-138 (LFAG…TILY), 168-188 (AILP…VIGL), 191-211 (EFAA…AFVV), 222-242 (FNAL…YLAI), and 256-276 (IFAY…ITHL).

The protein belongs to the UppP family.

Its subcellular location is the cell membrane. The catalysed reaction is di-trans,octa-cis-undecaprenyl diphosphate + H2O = di-trans,octa-cis-undecaprenyl phosphate + phosphate + H(+). Catalyzes the dephosphorylation of undecaprenyl diphosphate (UPP). In Methanobrevibacter smithii (strain ATCC 35061 / DSM 861 / OCM 144 / PS), this protein is Undecaprenyl-diphosphatase.